The following is a 63-amino-acid chain: Beta-defensin 38 (63 aa).

The signal sequence occupies residues 1–21 (MKISCFLLLILSLYFFQINQA). 3 disulfide bridges follow: C29-C58, C36-C51, and C41-C59.

It belongs to the beta-defensin family. Only expressed in epididymis (caput, corpus and cauda).

Its subcellular location is the secreted. In terms of biological role, synthetic Defb38 kills both Gram-negative (E.coli and P.aeruginosa) and Gram-positive (E.faecium) bacteria. This Mus musculus (Mouse) protein is Beta-defensin 38 (Defb38).